We begin with the raw amino-acid sequence, 88 residues long: Translation initiation factor IF-1 2 (88 aa).

Positions 1-72 constitute an S1-like domain; it reads MAKEELIEMQ…TKGRITFRHL (72 aa).

It belongs to the IF-1 family. In terms of assembly, component of the 30S ribosomal translation pre-initiation complex which assembles on the 30S ribosome in the order IF-2 and IF-3, IF-1 and N-formylmethionyl-tRNA(fMet); mRNA recruitment can occur at any time during PIC assembly.

It localises to the cytoplasm. One of the essential components for the initiation of protein synthesis. Stabilizes the binding of IF-2 and IF-3 on the 30S subunit to which N-formylmethionyl-tRNA(fMet) subsequently binds. Helps modulate mRNA selection, yielding the 30S pre-initiation complex (PIC). Upon addition of the 50S ribosomal subunit IF-1, IF-2 and IF-3 are released leaving the mature 70S translation initiation complex. This is Translation initiation factor IF-1 2 from Acidovorax sp. (strain JS42).